Reading from the N-terminus, the 114-residue chain is uncharacterized protein (114 aa).

The next 3 membrane-spanning stretches (helical) occupy residues 21–41 (LASS…VCLF), 65–85 (GCFS…SALI), and 93–113 (LSVF…ILTD).

It localises to the membrane. This is an uncharacterized protein from Saccharomyces cerevisiae (strain ATCC 204508 / S288c) (Baker's yeast).